We begin with the raw amino-acid sequence, 635 residues long: Biosynthetic arginine decarboxylase (635 aa).

An N6-(pyridoxal phosphate)lysine modification is found at Lys-100. 282–292 contacts substrate; the sequence is VDIGGGLGVDY.

This sequence belongs to the Orn/Lys/Arg decarboxylase class-II family. SpeA subfamily. It depends on Mg(2+) as a cofactor. Pyridoxal 5'-phosphate is required as a cofactor.

It catalyses the reaction L-arginine + H(+) = agmatine + CO2. It participates in amine and polyamine biosynthesis; agmatine biosynthesis; agmatine from L-arginine: step 1/1. Functionally, catalyzes the biosynthesis of agmatine from arginine. The chain is Biosynthetic arginine decarboxylase from Geobacter sulfurreducens (strain ATCC 51573 / DSM 12127 / PCA).